The primary structure comprises 344 residues: Glycerol-3-phosphate dehydrogenase [NAD(P)+] (344 aa).

NADPH contacts are provided by Ser11, Trp12, His32, Arg33, and Lys106. The sn-glycerol 3-phosphate site is built by Lys106, Gly136, and Ser138. Ala140 is a binding site for NADPH. 5 residues coordinate sn-glycerol 3-phosphate: Lys192, Asp245, Ser255, Arg256, and Asn257. Lys192 functions as the Proton acceptor in the catalytic mechanism. Arg256 is an NADPH binding site. Residues Val280 and Glu282 each contribute to the NADPH site.

It belongs to the NAD-dependent glycerol-3-phosphate dehydrogenase family.

The protein resides in the cytoplasm. The enzyme catalyses sn-glycerol 3-phosphate + NAD(+) = dihydroxyacetone phosphate + NADH + H(+). It carries out the reaction sn-glycerol 3-phosphate + NADP(+) = dihydroxyacetone phosphate + NADPH + H(+). It participates in membrane lipid metabolism; glycerophospholipid metabolism. Functionally, catalyzes the reduction of the glycolytic intermediate dihydroxyacetone phosphate (DHAP) to sn-glycerol 3-phosphate (G3P), the key precursor for phospholipid synthesis. The protein is Glycerol-3-phosphate dehydrogenase [NAD(P)+] of Geobacillus kaustophilus (strain HTA426).